The primary structure comprises 516 residues: Putative F-box and FNIP repeat-containing protein L414 (516 aa).

In terms of domain architecture, F-box spans 4–49 (INDLNMDVILHLLTFLTDKNKLNFMMTCTHLYQFISCVKYNNFQLF). 5 FNIP repeats span residues 123 to 165 (FNHT…FGEN), 166 to 208 (FNKM…LMYS), 341 to 383 (YNPK…NFNG), 385 to 428 (YDNI…FGKL), and 429 to 470 (YNKP…FGYM).

The protein is Putative F-box and FNIP repeat-containing protein L414 of Acanthamoeba polyphaga (Amoeba).